Reading from the N-terminus, the 66-residue chain is Large ribosomal subunit protein bL35 (66 aa).

It belongs to the bacterial ribosomal protein bL35 family.

This Thermomicrobium roseum (strain ATCC 27502 / DSM 5159 / P-2) protein is Large ribosomal subunit protein bL35.